A 115-amino-acid chain; its full sequence is DNA repair protein homolog YozK (115 aa).

The UmuC domain occupies 12-115 (ILCVDMKSFY…EKCVHTYSID (104 aa)). Asp-16 and Asp-115 together coordinate Mg(2+).

Belongs to the DNA polymerase type-Y family. It depends on Mg(2+) as a cofactor.

This is DNA repair protein homolog YozK (yozK) from Bacillus subtilis (strain 168).